Here is a 483-residue protein sequence, read N- to C-terminus: MKVLPASGLAVLLVTALKFSAAAPSLFAATPRTSRNNYHLAQAYLDKYYTKKGGHQVGEMVAKGGNSMVKKIKELQAFFGLRVTGKLDRTTMDVIKRPRCGVPDVANYRLFPGEPKWKKNTLTYRISKYTPSMTPAEVDKAMEMALQAWSSAVPLSFVRVNAGEADIMISFETGDHGDSYPFDGPRGTLAHAFAPGEGLGGDTHFDNAEKWTMGMNGFNLFTVAAHEFGHALGLAHSTDPSALMYPTYKYQNPYGFHLPKDDVKGIQALYGPRKTFTGKPTVPHGPPHNPSLPDICDSSSSFDAVTMLGKELLFFRDRIFWRRQVHLMSGIRPSTITSSFPQLMSNVDAAYEVADRGMAYFFKGPHYWITRGFQMQGPPRTIYDFGFPRYVQRIDAAVHLKDTQKTLFFVGDEYYSYDERKRKMDKDYPKNTEEEFSGVNGQIDAAVELNGYIYFFSGPKAYKYDTEKEDVVSVLKSNSWIGC.

An N-terminal signal peptide occupies residues 1 to 22; that stretch reads MKVLPASGLAVLLVTALKFSAA. A propeptide spans 23-107 (activation peptide); the sequence is APSLFAATPR…PRCGVPDVAN (85 aa). The Cysteine switch motif lies at 98–105; sequence PRCGVPDV. Residue Cys-100 coordinates Zn(2+). 3 residues coordinate Ca(2+): Glu-164, Ala-165, and Asp-166. Residues His-176 and Asp-178 each contribute to the Zn(2+) site. Asp-183, Gly-184, Arg-186, and Thr-188 together coordinate Ca(2+). His-191 serves as a coordination point for Zn(2+). Glu-197, Gly-198, Gly-200, and Asp-202 together coordinate Ca(2+). Residue His-204 coordinates Zn(2+). The Ca(2+) site is built by Asp-206 and Glu-209. His-226 is a binding site for Zn(2+). The active site involves Glu-227. 2 residues coordinate Zn(2+): His-230 and His-236. 4 Hemopexin repeats span residues 293 to 343, 344 to 389, 391 to 439, and 440 to 483; these read PDIC…FPQL, MSNV…GFPR, VQRI…FSGV, and NGQI…WIGC. Cys-296 and Cys-483 are oxidised to a cystine.

This sequence belongs to the peptidase M10A family. The cofactor is Zn(2+). Requires Ca(2+) as cofactor. Post-translationally, autoactivates at least at the 107-Asn-|-Tyr-108 site. Expressed specifically in the enamel organ.

The protein resides in the secreted. It is found in the extracellular space. The protein localises to the extracellular matrix. Functionally, degrades amelogenin, the major protein component of the enamel matrix and two of the macromolecules characterizing the cartilage extracellular matrix: aggrecan and the cartilage oligomeric matrix protein (COMP). May play a central role in tooth enamel formation. This chain is Matrix metalloproteinase-20 (MMP20), found in Sus scrofa (Pig).